The chain runs to 144 residues: MSKERTRCREKVLQLLFQKDLGQEVEVDFSDFSPQGQAFAYRLYDGALQYKDLADSIISRFSKNWKLERMGALERNILRLAIAEMFTFSDIPQAVTVNEAVELAKKYVSPEAGRFVNGILRNIVRNWEEVKSLKEGFVDVTPEN.

Belongs to the NusB family.

Functionally, involved in transcription antitermination. Required for transcription of ribosomal RNA (rRNA) genes. Binds specifically to the boxA antiterminator sequence of the ribosomal RNA (rrn) operons. The polypeptide is Transcription antitermination protein NusB (Dictyoglomus thermophilum (strain ATCC 35947 / DSM 3960 / H-6-12)).